Reading from the N-terminus, the 218-residue chain is Ropporin-1-like protein (218 aa).

The RIIa domain maps to 17–46 (PELTDILKQFTKAAIRTQPADVLQWSAGYF).

It belongs to the ropporin family. Component of the axonemal radial spoke complex 1 (RS1), at least composed of spoke head proteins RSPH1, RSPH3, RSPH9 and the cilia-specific component RSPH4A or sperm-specific component RSPH6A, spoke stalk proteins RSPH14, DNAJB13, DYDC1, ROPN1L and NME5, and the anchor protein IQUB. May interact with AKAP3. Interacts with FSCB; the interaction increases upon spermatozoa capacitation conditions. Interacts with CFAP61. Post-translationally, sumoylated, sumoylation decreases upon spermatozoa capacitation conditions.

The protein resides in the cell projection. Its subcellular location is the cilium. It localises to the flagellum. In terms of biological role, functions as part of axonemal radial spoke complexes that play an important part in the motility of sperm and cilia. Important for male fertility. With ROPN1, involved in fibrous sheath integrity and sperm motility, plays a role in PKA-dependent signaling processes required for spermatozoa capacitation. This chain is Ropporin-1-like protein (ROPN1L), found in Bos taurus (Bovine).